Here is a 495-residue protein sequence, read N- to C-terminus: Probable cytosol aminopeptidase (495 aa).

Lysine 261 and aspartate 266 together coordinate Mn(2+). The active site involves lysine 273. Mn(2+)-binding residues include aspartate 284, aspartate 343, and glutamate 345. Arginine 347 is an active-site residue.

Belongs to the peptidase M17 family. It depends on Mn(2+) as a cofactor.

Its subcellular location is the cytoplasm. It carries out the reaction Release of an N-terminal amino acid, Xaa-|-Yaa-, in which Xaa is preferably Leu, but may be other amino acids including Pro although not Arg or Lys, and Yaa may be Pro. Amino acid amides and methyl esters are also readily hydrolyzed, but rates on arylamides are exceedingly low.. The enzyme catalyses Release of an N-terminal amino acid, preferentially leucine, but not glutamic or aspartic acids.. Functionally, presumably involved in the processing and regular turnover of intracellular proteins. Catalyzes the removal of unsubstituted N-terminal amino acids from various peptides. This Chelativorans sp. (strain BNC1) protein is Probable cytosol aminopeptidase.